The sequence spans 85 residues: Large ribosomal subunit protein bL27 (85 aa).

The segment at 1–20 is disordered; it reads MAHKKAGGSTRNGRDSESKR.

The protein belongs to the bacterial ribosomal protein bL27 family.

The polypeptide is Large ribosomal subunit protein bL27 (Yersinia enterocolitica serotype O:8 / biotype 1B (strain NCTC 13174 / 8081)).